Consider the following 341-residue polypeptide: Enduracididine beta-hydroxylase (341 aa).

The Fe cation site is built by histidine 146 and glutamate 148. Residues 203-223 (HRIHGKAPGDESARESALRER) are disordered. Histidine 300 lines the Fe cation pocket.

Belongs to the clavaminate synthase family. The cofactor is Fe(2+).

It catalyses the reaction L-enduracididine + 2-oxoglutarate + O2 = (3S)-3-hydroxy-L-enduracididine + succinate + CO2. It participates in antibiotic biosynthesis. In terms of biological role, hydroxylates the beta carbon of free L-enduracididine to produce (3S)-3-hydroxy-L-enduracididine in biosynthesis of the nonproteinogenic amino acid beta-hydroxyenduracididine, a component of antibiotic mannopeptimycin. This chain is Enduracididine beta-hydroxylase (mppO), found in Streptomyces hygroscopicus.